Here is an 83-residue protein sequence, read N- to C-terminus: Arminin 3b (83 aa).

The N-terminal stretch at M1 to A18 is a signal peptide. Residues R19–A57 constitute a propeptide that is removed on maturation. Serine amide is present on S80.

Belongs to the arminin family. As to expression, expressed in entodermal epithelium along the body column.

It is found in the secreted. The protein resides in the target cell membrane. Antimicrobial peptide with a broad-spectrum antimicrobial activity. Keeps its antibacterial activity under a wide range of salt concentrations that mimic physiological conditions of human blood, which is surprising, since Hydra is an obligate freshwater animal with nearly no salt tolerance. Does not affect red blood cells. The chain is Arminin 3b from Hydra vulgaris (Hydra).